Here is a 555-residue protein sequence, read N- to C-terminus: 2-succinyl-5-enolpyruvyl-6-hydroxy-3-cyclohexene-1-carboxylate synthase (555 aa).

It belongs to the TPP enzyme family. MenD subfamily. In terms of assembly, homodimer. Mg(2+) is required as a cofactor. The cofactor is Mn(2+). It depends on thiamine diphosphate as a cofactor.

The catalysed reaction is isochorismate + 2-oxoglutarate + H(+) = 5-enolpyruvoyl-6-hydroxy-2-succinyl-cyclohex-3-ene-1-carboxylate + CO2. It participates in quinol/quinone metabolism; 1,4-dihydroxy-2-naphthoate biosynthesis; 1,4-dihydroxy-2-naphthoate from chorismate: step 2/7. The protein operates within quinol/quinone metabolism; menaquinone biosynthesis. Its function is as follows. Catalyzes the thiamine diphosphate-dependent decarboxylation of 2-oxoglutarate and the subsequent addition of the resulting succinic semialdehyde-thiamine pyrophosphate anion to isochorismate to yield 2-succinyl-5-enolpyruvyl-6-hydroxy-3-cyclohexene-1-carboxylate (SEPHCHC). In Kineococcus radiotolerans (strain ATCC BAA-149 / DSM 14245 / SRS30216), this protein is 2-succinyl-5-enolpyruvyl-6-hydroxy-3-cyclohexene-1-carboxylate synthase.